Consider the following 501-residue polypeptide: G protein-activated inward rectifier potassium channel 1 (501 aa).

A disordered region spans residues 1–40 (MSALRRKFGDDYQVVTTSSSGSGLQPQGPGQGPQQQLVPK). Residues 1–80 (MSALRRKFGD…LFTTLVDLKW (80 aa)) lie on the Cytoplasmic side of the membrane. A compositionally biased stretch (low complexity) spans 18-37 (SSSGSGLQPQGPGQGPQQQL). Residues 81 to 105 (RWNLFIFILTYTVAWLFMASMWWVI) traverse the membrane as a helical segment. The Extracellular segment spans residues 106 to 129 (AYTRGDLNKAHVGNYTPCVANVYN). N119 carries N-linked (GlcNAc...) asparagine glycosylation. Positions 130-141 (FPSAFLFFIETE) form an intramembrane region, helical; Pore-forming. The segment at residues 142-148 (ATIGYGY) is an intramembrane region (pore-forming). The Selectivity filter signature appears at 143–148 (TIGYGY). Topologically, residues 149–157 (RYITDKCPE) are extracellular. Residues 158 to 179 (GIILFLFQSILGSIVDAFLIGC) traverse the membrane as a helical segment. Topologically, residues 180-501 (MFIKMSQPKK…LRKMNSDRFT (322 aa)) are cytoplasmic. A polyphosphoinositide (PIP2)-binding region spans residues 182–209 (IKMSQPKKRAETLMFSEHAVISMRDGKL). A phosphoserine mark is found at S385 and S424.

It belongs to the inward rectifier-type potassium channel (TC 1.A.2.1) family. KCNJ3 subfamily. In terms of assembly, associates with KCNJ5/GIRK4 or KCNJ6/GIRK2 or KCNJ9/GIRK3 to form a G-protein activated heteromultimer pore-forming unit. The resulting inward current is much larger.

The protein localises to the membrane. It carries out the reaction K(+)(in) = K(+)(out). Its activity is regulated as follows. Heteromultimer composed of KCNJ3/GIRK1 and KCNJ5/GIRK4 is activated by phosphatidylinositol 4,5 biphosphate (PtdIns(4,5)P2). Its function is as follows. Inward rectifier potassium channels are characterized by a greater tendency to allow potassium to flow into the cell rather than out of it. Their voltage dependence is regulated by the concentration of extracellular potassium; as external potassium is raised, the voltage range of the channel opening shifts to more positive voltages. The inward rectification is mainly due to the blockage of outward current by internal magnesium. This potassium channel is controlled by G proteins. This receptor plays a crucial role in regulating the heartbeat. The protein is G protein-activated inward rectifier potassium channel 1 (KCNJ3) of Bos taurus (Bovine).